The chain runs to 200 residues: Proteasome subunit beta 2 (200 aa).

Residues 1–7 constitute a propeptide, removed in mature form; by autocatalysis; it reads METKKTG. The Nucleophile role is filled by T8.

Belongs to the peptidase T1B family. As to quaternary structure, the 20S proteasome core is composed of 14 alpha and 14 beta subunits that assemble into four stacked heptameric rings, resulting in a barrel-shaped structure. The two inner rings, each composed of seven catalytic beta subunits, are sandwiched by two outer rings, each composed of seven alpha subunits. The catalytic chamber with the active sites is on the inside of the barrel. Has a gated structure, the ends of the cylinder being occluded by the N-termini of the alpha-subunits. Is capped at one or both ends by the proteasome regulatory ATPase, PAN.

The protein localises to the cytoplasm. The enzyme catalyses Cleavage of peptide bonds with very broad specificity.. The formation of the proteasomal ATPase PAN-20S proteasome complex, via the docking of the C-termini of PAN into the intersubunit pockets in the alpha-rings, triggers opening of the gate for substrate entry. Interconversion between the open-gate and close-gate conformations leads to a dynamic regulation of the 20S proteasome proteolysis activity. Its function is as follows. Component of the proteasome core, a large protease complex with broad specificity involved in protein degradation. This Thermococcus onnurineus (strain NA1) protein is Proteasome subunit beta 2.